A 444-amino-acid chain; its full sequence is Nuclear distribution protein PAC1 (444 aa).

Residues 59–87 (TAIARLQRRIMSLEQNIRDLREASIEMNA) adopt a coiled-coil conformation. 7 WD repeats span residues 113 to 152 (TLES…LPLA), 156 to 199 (AHTR…KLLR), 204 to 251 (HEHV…CLKS), 254 to 293 (PHSD…SVGL), 307 to 347 (SLQD…RLPQ), 367 to 406 (GHDS…KKWN), and 408 to 444 (IHQG…IFMQ).

It belongs to the WD repeat LIS1/nudF family. In terms of assembly, self-associates. Interacts with NDL1 and dynein.

Its subcellular location is the cytoplasm. It localises to the cytoskeleton. The protein resides in the spindle pole. In terms of biological role, positively regulates the activity of the minus-end directed microtubule motor protein dynein. Plays a central role in positioning the mitotic spindle at the bud neck during cell division. Targets cytoplasmic dynein to microtubule plus ends, thereby promoting dynein-mediated microtubule sliding along the bud cortex and consequently the movement of the mitotic spindle to the bud neck. This is Nuclear distribution protein PAC1 from Zygosaccharomyces rouxii (strain ATCC 2623 / CBS 732 / NBRC 1130 / NCYC 568 / NRRL Y-229).